Consider the following 242-residue polypeptide: Probable transcriptional regulatory protein Bphy_2064 (242 aa).

This sequence belongs to the TACO1 family.

It localises to the cytoplasm. This is Probable transcriptional regulatory protein Bphy_2064 from Paraburkholderia phymatum (strain DSM 17167 / CIP 108236 / LMG 21445 / STM815) (Burkholderia phymatum).